The following is a 184-amino-acid chain: Large ribosomal subunit protein uL5 (184 aa).

The protein belongs to the universal ribosomal protein uL5 family. In terms of assembly, part of the 50S ribosomal subunit; part of the 5S rRNA/L5/L18/L25 subcomplex. Contacts the 5S rRNA and the P site tRNA. Forms a bridge to the 30S subunit in the 70S ribosome.

This is one of the proteins that bind and probably mediate the attachment of the 5S RNA into the large ribosomal subunit, where it forms part of the central protuberance. In the 70S ribosome it contacts protein S13 of the 30S subunit (bridge B1b), connecting the 2 subunits; this bridge is implicated in subunit movement. Contacts the P site tRNA; the 5S rRNA and some of its associated proteins might help stabilize positioning of ribosome-bound tRNAs. The protein is Large ribosomal subunit protein uL5 of Pelagibacter ubique (strain HTCC1062).